Reading from the N-terminus, the 259-residue chain is Probable dihydroorotate dehydrogenase B (NAD(+)), electron transfer subunit (259 aa).

The 89-residue stretch at Met-1–Leu-89 folds into the FAD-binding FR-type domain. Cys-211, Cys-216, Cys-219, and Cys-229 together coordinate [2Fe-2S] cluster.

Belongs to the PyrK family. As to quaternary structure, heterotetramer of 2 PyrK and 2 PyrD type B subunits. [2Fe-2S] cluster is required as a cofactor. It depends on FAD as a cofactor.

The protein operates within pyrimidine metabolism; UMP biosynthesis via de novo pathway; orotate from (S)-dihydroorotate (NAD(+) route): step 1/1. Responsible for channeling the electrons from the oxidation of dihydroorotate from the FMN redox center in the PyrD type B subunit to the ultimate electron acceptor NAD(+). In Methanosarcina barkeri (strain Fusaro / DSM 804), this protein is Probable dihydroorotate dehydrogenase B (NAD(+)), electron transfer subunit.